We begin with the raw amino-acid sequence, 208 residues long: Small ribosomal subunit protein uS4 (208 aa).

The disordered stretch occupies residues 30 to 51; the sequence is KSSLEKRPYAPGQHGQRRSKIS. In terms of domain architecture, S4 RNA-binding spans 98 to 161; it reads RRLDNVVYRM…KNNPQVQRSI (64 aa).

This sequence belongs to the universal ribosomal protein uS4 family. As to quaternary structure, part of the 30S ribosomal subunit. Contacts protein S5. The interaction surface between S4 and S5 is involved in control of translational fidelity.

Its function is as follows. One of the primary rRNA binding proteins, it binds directly to 16S rRNA where it nucleates assembly of the body of the 30S subunit. With S5 and S12 plays an important role in translational accuracy. This is Small ribosomal subunit protein uS4 from Wolinella succinogenes (strain ATCC 29543 / DSM 1740 / CCUG 13145 / JCM 31913 / LMG 7466 / NCTC 11488 / FDC 602W) (Vibrio succinogenes).